Reading from the N-terminus, the 115-residue chain is Large ribosomal subunit protein bL20c (115 aa).

The protein belongs to the bacterial ribosomal protein bL20 family.

Its subcellular location is the plastid. It is found in the chloroplast. In terms of biological role, binds directly to 23S ribosomal RNA and is necessary for the in vitro assembly process of the 50S ribosomal subunit. It is not involved in the protein synthesizing functions of that subunit. This Angiopteris evecta (Mule's foot fern) protein is Large ribosomal subunit protein bL20c.